We begin with the raw amino-acid sequence, 214 residues long: Putative nickel/cobalt efflux system MJ1092 (214 aa).

6 helical membrane passes run 2–22 (VMIMELLYAITAFILGMLHAL), 46–66 (ILLGTTITISHTAVIFLLGIL), 79–99 (VHDMMSVVGGLILIAVGIWII), 116–136 (VITLGLSAGLVPCPAALAVLL), 149–169 (IYVAIFSIGLAISLTGLAVAF), and 188–208 (LPLISGSIIILIGLYTIAHPI).

This sequence belongs to the NiCoT transporter (TC 2.A.52) family.

It is found in the cell membrane. Functionally, efflux system for nickel and cobalt. This Methanocaldococcus jannaschii (strain ATCC 43067 / DSM 2661 / JAL-1 / JCM 10045 / NBRC 100440) (Methanococcus jannaschii) protein is Putative nickel/cobalt efflux system MJ1092.